Here is a 401-residue protein sequence, read N- to C-terminus: Collagen and calcium-binding EGF domain-containing protein 1 (401 aa).

A signal peptide spans 1–22; it reads MIYPGRGASLSVAVALVLFSSG. The EGF-like; calcium-binding domain occupies 126 to 167; sequence DIDECANNNETVCSQMCVNTPGSYRCDCHSGFYLEDDGKTCT. 3 disulfides stabilise this stretch: Cys-130–Cys-142, Cys-138–Cys-151, and Cys-153–Cys-166. N-linked (GlcNAc...) asparagine glycosylation occurs at Asn-134. 2 disordered regions span residues 229–321 and 344–401; these read TTNS…PGSF and SRPL…DWPV. Collagen-like domains lie at 234-276 and 286-319; these read LPGP…PIGP and GRRG…GPPG. Residues 235 to 244 are compositionally biased toward pro residues; it reads PGPPGPPGPA. A compositionally biased stretch (low complexity) spans 246-258; that stretch reads TPGAKGSSGSPGQ.

Belongs to the CCBE1 family. In terms of tissue distribution, not expressed in blood or lymphatic endothelial cells, correlating spatially and temporally with the migration routes of endothelial cells that bud from the PCV, migrate in association with somite boundaries and seed the horizontal myoseptum region from where lymphatic precursors later migrate.

The protein localises to the secreted. Required for lymphangioblast budding and angiogenic sprouting from venous endothelium during embryogenesis. Required for the formation of facial lymphatic structures. Necessary for lymphangiogenesis, but is probably not part of either the vegfc-vegfr3 signaling or sox18-prox1 transcriptional pathways. This Danio rerio (Zebrafish) protein is Collagen and calcium-binding EGF domain-containing protein 1 (ccbe1).